The sequence spans 343 residues: DNA-directed RNA polymerase subunit alpha (343 aa).

The alpha N-terminal domain (alpha-NTD) stretch occupies residues 1 to 236; the sequence is MQEHYYKFWR…EQLQIFLTFD (236 aa). The alpha C-terminal domain (alpha-CTD) stretch occupies residues 253-343; that stretch reads LNENLFRSVD…QPPQKRETQQ (91 aa).

This sequence belongs to the RNA polymerase alpha chain family. Homodimer. The RNAP catalytic core consists of 2 alpha, 1 beta, 1 beta' and 1 omega subunit. When a sigma factor is associated with the core the holoenzyme is formed, which can initiate transcription.

The catalysed reaction is RNA(n) + a ribonucleoside 5'-triphosphate = RNA(n+1) + diphosphate. In terms of biological role, DNA-dependent RNA polymerase catalyzes the transcription of DNA into RNA using the four ribonucleoside triphosphates as substrates. The polypeptide is DNA-directed RNA polymerase subunit alpha (Bdellovibrio bacteriovorus (strain ATCC 15356 / DSM 50701 / NCIMB 9529 / HD100)).